A 350-amino-acid chain; its full sequence is Putative D-xylulose reductase (350 aa).

Residues C43, H68, and E154 each contribute to the Zn(2+) site.

It belongs to the zinc-containing alcohol dehydrogenase family. Zn(2+) serves as cofactor.

The enzyme catalyses xylitol + NAD(+) = D-xylulose + NADH + H(+). This is Putative D-xylulose reductase from Agrobacterium fabrum (strain C58 / ATCC 33970) (Agrobacterium tumefaciens (strain C58)).